We begin with the raw amino-acid sequence, 221 residues long: Phosphoglycolate phosphatase (221 aa).

Aspartate 10 functions as the Nucleophile in the catalytic mechanism. Mg(2+) is bound by residues aspartate 10, aspartate 12, and aspartate 168.

Belongs to the HAD-like hydrolase superfamily. CbbY/CbbZ/Gph/YieH family. It depends on Mg(2+) as a cofactor.

The enzyme catalyses 2-phosphoglycolate + H2O = glycolate + phosphate. The protein operates within organic acid metabolism; glycolate biosynthesis; glycolate from 2-phosphoglycolate: step 1/1. Its function is as follows. Specifically catalyzes the dephosphorylation of 2-phosphoglycolate. Is involved in the dissimilation of the intracellular 2-phosphoglycolate formed during the DNA repair of 3'-phosphoglycolate ends, a major class of DNA lesions induced by oxidative stress. In Xanthomonas campestris pv. campestris (strain 8004), this protein is Phosphoglycolate phosphatase.